The following is a 312-amino-acid chain: Malate dehydrogenase (312 aa).

Residues 12-17 and aspartate 36 each bind NAD(+); that span reads GAGFTG. Arginine 87 and arginine 93 together coordinate substrate. Residues asparagine 100 and 123–125 each bind NAD(+); that span reads LTN. Asparagine 125 is a substrate binding site. A Phosphoserine modification is found at serine 149. Arginine 156 provides a ligand contact to substrate. Histidine 180 (proton acceptor) is an active-site residue.

This sequence belongs to the LDH/MDH superfamily. MDH type 3 family.

It carries out the reaction (S)-malate + NAD(+) = oxaloacetate + NADH + H(+). Catalyzes the reversible oxidation of malate to oxaloacetate. The polypeptide is Malate dehydrogenase (Bacillus cytotoxicus (strain DSM 22905 / CIP 110041 / 391-98 / NVH 391-98)).